A 229-amino-acid polypeptide reads, in one-letter code: Cytochrome c oxidase subunit 2 (229 aa).

At 1–26 the chain is on the mitochondrial intermembrane side; sequence MATWMNINLQDANSSTMEQLTMFHDH. A helical transmembrane segment spans residues 27 to 48; sequence TLMILTMITSIVTFIMVSMTTN. Topologically, residues 49-62 are mitochondrial matrix; sequence TLINRYLLEGQTIE. A helical transmembrane segment spans residues 63–82; sequence FIWTTIPAITLIFIALPSLH. The Mitochondrial intermembrane portion of the chain corresponds to 83–229; it reads LLYLIDEINN…LKWINKSLSS (147 aa). Positions 161, 196, 198, 200, 204, and 207 each coordinate Cu cation. Glu198 lines the Mg(2+) pocket.

This sequence belongs to the cytochrome c oxidase subunit 2 family. As to quaternary structure, component of the cytochrome c oxidase (complex IV, CIV), a multisubunit enzyme composed of a catalytic core of 3 subunits and several supernumerary subunits. The complex exists as a monomer or a dimer and forms supercomplexes (SCs) in the inner mitochondrial membrane with ubiquinol-cytochrome c oxidoreductase (cytochrome b-c1 complex, complex III, CIII). The cofactor is Cu cation.

It localises to the mitochondrion inner membrane. It catalyses the reaction 4 Fe(II)-[cytochrome c] + O2 + 8 H(+)(in) = 4 Fe(III)-[cytochrome c] + 2 H2O + 4 H(+)(out). Its function is as follows. Component of the cytochrome c oxidase, the last enzyme in the mitochondrial electron transport chain which drives oxidative phosphorylation. The respiratory chain contains 3 multisubunit complexes succinate dehydrogenase (complex II, CII), ubiquinol-cytochrome c oxidoreductase (cytochrome b-c1 complex, complex III, CIII) and cytochrome c oxidase (complex IV, CIV), that cooperate to transfer electrons derived from NADH and succinate to molecular oxygen, creating an electrochemical gradient over the inner membrane that drives transmembrane transport and the ATP synthase. Cytochrome c oxidase is the component of the respiratory chain that catalyzes the reduction of oxygen to water. Electrons originating from reduced cytochrome c in the intermembrane space (IMS) are transferred via the dinuclear copper A center (CU(A)) of subunit 2 and heme A of subunit 1 to the active site in subunit 1, a binuclear center (BNC) formed by heme A3 and copper B (CU(B)). The BNC reduces molecular oxygen to 2 water molecules using 4 electrons from cytochrome c in the IMS and 4 protons from the mitochondrial matrix. This Oncopeltus fasciatus (Large milkweed bug) protein is Cytochrome c oxidase subunit 2 (COII).